A 173-amino-acid polypeptide reads, in one-letter code: Adenine phosphoribosyltransferase (173 aa).

The protein belongs to the purine/pyrimidine phosphoribosyltransferase family. In terms of assembly, homodimer.

The protein resides in the cytoplasm. The enzyme catalyses AMP + diphosphate = 5-phospho-alpha-D-ribose 1-diphosphate + adenine. It participates in purine metabolism; AMP biosynthesis via salvage pathway; AMP from adenine: step 1/1. In terms of biological role, catalyzes a salvage reaction resulting in the formation of AMP, that is energically less costly than de novo synthesis. The protein is Adenine phosphoribosyltransferase of Macrococcus caseolyticus (strain JCSC5402) (Macrococcoides caseolyticum).